The chain runs to 744 residues: Tripartite motif-containing protein 3 (744 aa).

Alanine 2 is modified (N-acetylalanine). Positions 2 to 290 (AKREDSPGPE…LAAQAFPERP (289 aa)) are interaction with KIF21B. Serine 7 carries the post-translational modification Phosphoserine. Residues 22 to 63 (CSICLDRYRCPKVLPCLHTFCERCLQNYIPPQSLTLSCPVCR) form an RING-type zinc finger. A B box-type zinc finger spans residues 110–151 (GRPLSCPNHEGKTMEFYCEACETAMCGECRAGEHREHGTVLL). Zn(2+) contacts are provided by cysteine 115, histidine 118, cysteine 138, and histidine 143. Positions 153–224 (DVVEQHKAAL…RKQALVSDLE (72 aa)) form a coiled coil. A Filamin repeat occupies 317-418 (TTSAAAHETV…VRGSPFRVRA (102 aa)). Positions 420 to 462 (RPGDLPPSPDDVKRRVKSPGGPGSHVRQKAVRRPSSMYSTGGK) are disordered. A Phosphoserine modification is found at serine 427. 6 NHL repeats span residues 473-516 (VFRV…FSNE), 520-563 (KFRF…FSPE), 564-605 (GKFK…FQPN), 609-652 (VGRF…YSAD), 656-699 (LFKF…FDSS), and 700-743 (GSFL…YRYL).

This sequence belongs to the TRIM/RBCC family. In terms of assembly, forms homooligomers. Interacts with TRIM2; this interaction reduces TRIM2 activity. Associates with myosin-Vb (MYO5B) and alpha-actinin-4 (ACTN4). Component of the CART complex, at least composed of ACTN4, HGS/HRS, MYO5B and TRIM3. Interacts with ZFYVE28/LST2. Interacts with KIF21B. Highly expressed in the brain, moderate levels in the lung, very low levels in the liver, kidney and heart. In the brain, expression was highest in the cerebellum. Expression in the brain is found at low levels at embryonic day 15 and then increases during the first two postnatal weeks before decreasing through adulthood.

The protein localises to the cytoplasm. The protein resides in the early endosome. Its subcellular location is the golgi apparatus. It is found in the trans-Golgi network. It localises to the cell projection. The protein localises to the dendrite. It catalyses the reaction S-ubiquitinyl-[E2 ubiquitin-conjugating enzyme]-L-cysteine + [acceptor protein]-L-lysine = [E2 ubiquitin-conjugating enzyme]-L-cysteine + N(6)-ubiquitinyl-[acceptor protein]-L-lysine.. E3 ubiquitin ligase that plays essential roles in neuronal functions such as regulation of neuronal plasticity, learning, and memory. In addition to its neuronal functions, participates in other biological processes such as innate immunity or cell cycle regulation. Component of the cytoskeleton-associated recycling or transport complex in neurons, polyubiquitinates gamma-actin, thus regulating neuronal plasticity, learning, and memory. Ubiquitinates postsynaptic scaffold GKAP, a neuronal substrate involved in synaptic remodeling and thereby modulates dendritic spine morphology. Positively regulates motility of microtubule-dependent motor protein KIF21B. Induces growth arrest via its RING-dependent E3 ligase activity and ubiquinates CDKN1A. Positively regulates TLR3-mediated signaling by mediating 'Lys-63'-linked polyubiquitination of TLR3. In turn, promotes the recognition and sorting of polyubiquitinated TLR3 by the ESCRT complexes. The polypeptide is Tripartite motif-containing protein 3 (Trim3) (Rattus norvegicus (Rat)).